Consider the following 630-residue polypeptide: tRNA uridine 5-carboxymethylaminomethyl modification enzyme MnmG (630 aa).

G15–G20 contacts FAD. G276–F290 lines the NAD(+) pocket.

This sequence belongs to the MnmG family. As to quaternary structure, homodimer. Heterotetramer of two MnmE and two MnmG subunits. FAD serves as cofactor.

The protein localises to the cytoplasm. NAD-binding protein involved in the addition of a carboxymethylaminomethyl (cmnm) group at the wobble position (U34) of certain tRNAs, forming tRNA-cmnm(5)s(2)U34. This Latilactobacillus sakei subsp. sakei (strain 23K) (Lactobacillus sakei subsp. sakei) protein is tRNA uridine 5-carboxymethylaminomethyl modification enzyme MnmG.